The sequence spans 47 residues: Defensin Ec-AMP-D1 (47 aa).

Intrachain disulfides connect C3/C47, C14/C34, C20/C41, and C24/C43.

In terms of biological role, has antifungal activity. Inhibits spore germination in F.graminearum (IC(50)=15 ug/ml), F.oxysporum (IC(50)=102 ug/ml), F.verticillioides (IC(50)=8.5 ug/ml) and D.maydis (IC(50)=12.5 ug/ml), but not in C.graminicola, B.cinerea and H.sativum at concentrations below 30 ug/ml. Inhibits hyphal development in P.infestans (IC(50)=25.5 ug/ml), but not release of zoospores. At concentrations above 100 ug/ml, induces morphological changes such as lysis of hyphae and sporangia in P.infestans. The polypeptide is Defensin Ec-AMP-D1 (Echinochloa crus-galli (Barnyard grass)).